We begin with the raw amino-acid sequence, 310 residues long: 4-hydroxyproline 2-epimerase (310 aa).

The active-site Proton acceptor is cysteine 85. Residues 86–87 (GH), histidine 205, and aspartate 231 contribute to the substrate site. Residue cysteine 235 is the Proton donor of the active site. 236-237 (GT) is a binding site for substrate.

The protein belongs to the proline racemase family.

The enzyme catalyses trans-4-hydroxy-L-proline = cis-4-hydroxy-D-proline. In terms of biological role, catalyzes the epimerization of trans-4-hydroxy-L-proline (t4LHyp) to cis-4-hydroxy-D-proline (c4DHyp). May be involved in a degradation pathway of t4LHyp, which would allow L.aggregata to grow on t4LHyp as a sole carbon source. Displays no proline racemase activity. The sequence is that of 4-hydroxyproline 2-epimerase from Roseibium aggregatum (strain ATCC 25650 / DSM 13394 / JCM 20685 / NBRC 16684 / NCIMB 2208 / IAM 12614 / B1) (Stappia aggregata).